A 329-amino-acid chain; its full sequence is Acetyl-coenzyme A carboxylase carboxyl transferase subunit alpha (329 aa).

The CoA carboxyltransferase C-terminal domain maps to 40 to 294 (QLESLASRRR…RAALERHLGE (255 aa)).

The protein belongs to the AccA family. In terms of assembly, acetyl-CoA carboxylase is a heterohexamer composed of biotin carboxyl carrier protein (AccB), biotin carboxylase (AccC) and two subunits each of ACCase subunit alpha (AccA) and ACCase subunit beta (AccD).

The protein localises to the cytoplasm. The enzyme catalyses N(6)-carboxybiotinyl-L-lysyl-[protein] + acetyl-CoA = N(6)-biotinyl-L-lysyl-[protein] + malonyl-CoA. It functions in the pathway lipid metabolism; malonyl-CoA biosynthesis; malonyl-CoA from acetyl-CoA: step 1/1. Component of the acetyl coenzyme A carboxylase (ACC) complex. First, biotin carboxylase catalyzes the carboxylation of biotin on its carrier protein (BCCP) and then the CO(2) group is transferred by the carboxyltransferase to acetyl-CoA to form malonyl-CoA. This is Acetyl-coenzyme A carboxylase carboxyl transferase subunit alpha from Synechococcus sp. (strain CC9902).